Reading from the N-terminus, the 273-residue chain is HTH-type transcriptional activator RhaS (273 aa).

The region spanning 174-272 (YQLLDWLQNN…SQSPRDLRSQ (99 aa)) is the HTH araC/xylS-type domain. 2 consecutive DNA-binding regions (H-T-H motif) follow at residues 191–212 (PELA…KNKT) and 239–262 (VTDI…KREF).

As to quaternary structure, binds DNA as a dimer.

It is found in the cytoplasm. Functionally, activates expression of the rhaBAD and rhaT operons. The sequence is that of HTH-type transcriptional activator RhaS from Yersinia pseudotuberculosis serotype I (strain IP32953).